The following is a 500-amino-acid chain: Probable malate:quinone oxidoreductase (500 aa).

Belongs to the MQO family. FAD serves as cofactor.

It carries out the reaction (S)-malate + a quinone = a quinol + oxaloacetate. Its pathway is carbohydrate metabolism; tricarboxylic acid cycle; oxaloacetate from (S)-malate (quinone route): step 1/1. This is Probable malate:quinone oxidoreductase from Bordetella avium (strain 197N).